The following is a 570-amino-acid chain: Repressible high-affinity phosphate permease (570 aa).

At 1–61 the chain is on the cytoplasmic side; sequence MSTPQKTAGG…AVAGVGFFTD (61 aa). Residues 62–82 form a helical membrane-spanning segment; sequence SYDIFTVSLLTLMLGIVYFPG. The Extracellular portion of the chain corresponds to 83–95; it reads EGKMPTTSDTAIK. Residues 96–116 traverse the membrane as a helical segment; it reads LATSAGTVIGQVGFGAAADVF. Over 117-120 the chain is Cytoplasmic; it reads GRKS. Residues 121–141 traverse the membrane as a helical segment; that stretch reads MYGLELLFIIFATLAQALASG. Residues 142 to 143 lie on the Extracellular side of the membrane; it reads SP. The helical transmembrane segment at 144–164 threads the bilayer; sequence SINIIGIIIFWRVLMGVGIGG. The Cytoplasmic portion of the chain corresponds to 165–186; sequence DYPLSSIITSEFATTKWRGAMM. Residues 187–207 traverse the membrane as a helical segment; sequence GAVFAMQGLGQLAAAFVMLFV. Over 208-237 the chain is Extracellular; sequence TLGFKKSLEAAPTLASCTGDCAVAVDKMWR. Residues 238 to 258 traverse the membrane as a helical segment; that stretch reads TVIGVGAVPGCIALYYRLTIP. The Cytoplasmic portion of the chain corresponds to 259-325; that stretch reads ETPRYTFDVK…FFRHYSKRKN (67 aa). A helical transmembrane segment spans residues 326–346; the sequence is AMLLAGTALSWCFLDIAYYGV. Residues 347–374 lie on the Extracellular side of the membrane; sequence SLNNATILNVIGYSTTGAKNTYEILYNT. The chain crosses the membrane as a helical span at residues 375 to 395; sequence AVGNLIIVLAGAVPGYWVTVF. Topologically, residues 396 to 403 are cytoplasmic; it reads TVDTVGRK. The helical transmembrane segment at 404 to 424 threads the bilayer; the sequence is PIQFMGFGILTILFVVMGFAY. Residues 425–433 lie on the Extracellular side of the membrane; sequence KHLSPHALL. Residues 434 to 454 traverse the membrane as a helical segment; the sequence is AIFVLAQFFFNFGPNATTFIV. The Cytoplasmic segment spans residues 455-468; sequence PGEVFPTRYRSTSH. A helical transmembrane segment spans residues 469–489; the sequence is GLSAAMGKIGSIIGQGAIAPL. At 490–505 the chain is on the extracellular side; that stretch reads RTRGAVKGGNPNPWMN. A helical transmembrane segment spans residues 506–526; that stretch reads HVLEIYALFMLLGVGTTFLIP. Residues 527-570 are Cytoplasmic-facing; sequence ETKRKTLEELSGEFDMSGEEEAQRDTTLTEHKTEAPTSSAAVNA. Residues 537–546 are compositionally biased toward acidic residues; the sequence is SGEFDMSGEE. Residues 537–570 are disordered; it reads SGEFDMSGEEEAQRDTTLTEHKTEAPTSSAAVNA. The segment covering 547 to 560 has biased composition (basic and acidic residues); sequence EAQRDTTLTEHKTE. The span at 561–570 shows a compositional bias: polar residues; that stretch reads APTSSAAVNA.

It belongs to the major facilitator superfamily. Sugar transporter (TC 2.A.1.1) family.

It localises to the cell membrane. Phosphate transport activity is competitively inhibited by arsenate. In terms of biological role, high-affinity transporter for external inorganic phosphate. Acts probably as a H(+)-phosphate symporter. The chain is Repressible high-affinity phosphate permease from Neurospora crassa (strain ATCC 24698 / 74-OR23-1A / CBS 708.71 / DSM 1257 / FGSC 987).